The primary structure comprises 501 residues: DEAD-box ATP-dependent RNA helicase 36 (501 aa).

The interval 1–68 (MEVDGEARPF…AAAVTEHAGD (68 aa)) is disordered. A compositionally biased stretch (pro residues) spans 36–46 (EEPPNPSPSPA). A compositionally biased stretch (low complexity) spans 59-68 (AAAVTEHAGD). Positions 77–105 (STFAELGLSQWLVDVCDSLGMRVPTAVQR) match the Q motif motif. The Helicase ATP-binding domain occupies 108 to 281 (IPRALEGRDV…ELSGNNSYFF (174 aa)). Residue 121 to 128 (AETGSGKT) coordinates ATP. A DEAD box motif is present at residues 229–232 (DEAD). The Helicase C-terminal domain occupies 292-456 (TLKQLYIHVP…AYDGEMRDVN (165 aa)). The span at 473–486 (MADEGHEDKVQARK) shows a compositional bias: basic and acidic residues. The segment at 473–501 (MADEGHEDKVQARKEQKKRAQERKRKHDE) is disordered. The stretch at 475 to 501 (DEGHEDKVQARKEQKKRAQERKRKHDE) forms a coiled coil. A compositionally biased stretch (basic residues) spans 487–501 (EQKKRAQERKRKHDE).

This sequence belongs to the DEAD box helicase family. DDX49/DBP8 subfamily.

The enzyme catalyses ATP + H2O = ADP + phosphate + H(+). The sequence is that of DEAD-box ATP-dependent RNA helicase 36 from Oryza sativa subsp. japonica (Rice).